A 116-amino-acid polypeptide reads, in one-letter code: UPF0127 protein PF1050 (116 aa).

This sequence belongs to the UPF0127 family.

The chain is UPF0127 protein PF1050 from Pyrococcus furiosus (strain ATCC 43587 / DSM 3638 / JCM 8422 / Vc1).